We begin with the raw amino-acid sequence, 295 residues long: 33 kDa chaperonin (295 aa).

Cystine bridges form between Cys238-Cys240 and Cys271-Cys274.

This sequence belongs to the HSP33 family. Under oxidizing conditions two disulfide bonds are formed involving the reactive cysteines. Under reducing conditions zinc is bound to the reactive cysteines and the protein is inactive.

It localises to the cytoplasm. In terms of biological role, redox regulated molecular chaperone. Protects both thermally unfolding and oxidatively damaged proteins from irreversible aggregation. Plays an important role in the bacterial defense system toward oxidative stress. The polypeptide is 33 kDa chaperonin (Levilactobacillus brevis (strain ATCC 367 / BCRC 12310 / CIP 105137 / JCM 1170 / LMG 11437 / NCIMB 947 / NCTC 947) (Lactobacillus brevis)).